A 1400-amino-acid chain; its full sequence is DNA-directed RNA polymerase subunit beta' (1400 aa).

Zn(2+) contacts are provided by cysteine 70, cysteine 72, cysteine 85, and cysteine 88. Mg(2+) is bound by residues aspartate 460, aspartate 462, and aspartate 464. Zn(2+)-binding residues include cysteine 814, cysteine 887, cysteine 894, and cysteine 897.

This sequence belongs to the RNA polymerase beta' chain family. In terms of assembly, the RNAP catalytic core consists of 2 alpha, 1 beta, 1 beta' and 1 omega subunit. When a sigma factor is associated with the core the holoenzyme is formed, which can initiate transcription. Mg(2+) is required as a cofactor. Requires Zn(2+) as cofactor.

It catalyses the reaction RNA(n) + a ribonucleoside 5'-triphosphate = RNA(n+1) + diphosphate. Functionally, DNA-dependent RNA polymerase catalyzes the transcription of DNA into RNA using the four ribonucleoside triphosphates as substrates. In Marinomonas sp. (strain MWYL1), this protein is DNA-directed RNA polymerase subunit beta'.